Here is a 119-residue protein sequence, read N- to C-terminus: Ribosome-binding factor A (119 aa).

This sequence belongs to the RbfA family. As to quaternary structure, monomer. Binds 30S ribosomal subunits, but not 50S ribosomal subunits or 70S ribosomes.

It is found in the cytoplasm. Functionally, one of several proteins that assist in the late maturation steps of the functional core of the 30S ribosomal subunit. Associates with free 30S ribosomal subunits (but not with 30S subunits that are part of 70S ribosomes or polysomes). Required for efficient processing of 16S rRNA. May interact with the 5'-terminal helix region of 16S rRNA. The sequence is that of Ribosome-binding factor A from Chlorobium limicola (strain DSM 245 / NBRC 103803 / 6330).